We begin with the raw amino-acid sequence, 296 residues long: 6-hydroxypseudooxynicotine dehydrogenase complex subunit alpha (296 aa).

The FAD-binding PCMH-type domain maps to 1–177 (MKPPSFDYVV…VEVNVPQLPH (177 aa)). FAD-binding positions include 30–37 (IIAGGQSL), 111–115 (TIGGS), and Glu-124.

As to quaternary structure, heterohexamer of 2 alpha (kdhA), 2 beta (kdhB) and 2 gamma (kdhC) subunit. Dimer of heterotrimers. It depends on FAD as a cofactor.

The catalysed reaction is 6-hydroxypseudooxynicotine + A + H2O = 2,6-dihydroxypseudooxynicotine + AH2. The protein operates within alkaloid degradation; nicotine degradation. Functionally, molybdo-flavoprotein enzyme complex involved in nicotine degradation. The subunit gamma (large subunit) contains the substrate-binding sites, the subunit alpha (medium subunit) binds FAD and the subunit beta (small subunit) has a 2Fe-2S ferredoxin-type domain which binds 2 2Fe-2S clusters. The sequence is that of 6-hydroxypseudooxynicotine dehydrogenase complex subunit alpha (kdhA) from Paenarthrobacter nicotinovorans (Arthrobacter nicotinovorans).